The following is a 255-amino-acid chain: Flagellar L-ring protein (255 aa).

The N-terminal stretch at 1–25 (MRRHSTRKTVARVAVVALAVGVLAG) is a signal peptide. Cys26 carries N-palmitoyl cysteine lipidation. A lipid anchor (S-diacylglycerol cysteine) is attached at Cys26.

The protein belongs to the FlgH family. The basal body constitutes a major portion of the flagellar organelle and consists of four rings (L,P,S, and M) mounted on a central rod.

It localises to the cell outer membrane. It is found in the bacterial flagellum basal body. Functionally, assembles around the rod to form the L-ring and probably protects the motor/basal body from shearing forces during rotation. This is Flagellar L-ring protein from Rhodospirillum rubrum (strain ATCC 11170 / ATH 1.1.1 / DSM 467 / LMG 4362 / NCIMB 8255 / S1).